We begin with the raw amino-acid sequence, 318 residues long: N-succinylornithine carbamoyltransferase (318 aa).

Carbamoyl phosphate-binding positions include 47–50 (SLRT), Trp75, and Arg110. Glu142 lines the N(2)-succinyl-L-ornithine pocket. Residue 147–150 (HPLQ) coordinates carbamoyl phosphate. Positions 176 and 236 each coordinate N(2)-succinyl-L-ornithine. 274 to 275 (CL) contacts carbamoyl phosphate. A N(2)-succinyl-L-ornithine-binding site is contributed by Arg278. Position 302 (Arg302) interacts with carbamoyl phosphate.

Belongs to the aspartate/ornithine carbamoyltransferase superfamily. SOTCase family. In terms of assembly, homotrimer.

It catalyses the reaction N(2)-succinyl-L-ornithine + carbamoyl phosphate = N(2)-succinyl-L-citrulline + phosphate + H(+). It functions in the pathway amino-acid biosynthesis; L-arginine biosynthesis. Functionally, catalyzes the transfer of the carbamoyl group from carbamoyl phosphate to the delta-amino group of N(2)-succinyl-L-ornithine to produce N(2)-succinyl-L-citrulline. Is essential for arginine biosynthesis. Has no activity with either L-ornithine or L-aspartate as substrate. Also has no detectable AOTCase activity, being unable to convert N(2)-acetyl-L-ornithine to N(2)-acetyl-L-citrulline. This Bacteroides fragilis (strain 638R) protein is N-succinylornithine carbamoyltransferase.